Here is a 505-residue protein sequence, read N- to C-terminus: MNLRPEEISSIIQEQIKRYENKLEVKDVGTVIQVGDAIARIHGLEKCMAGELLEFPGGVYGMALNLEEDNVGCVLLGSDDKIKEGDTVKRTGRIVEVPVGEALLGRVVNSLGQPIDGKGPIQTDKYRDIERVAPGIIARKSVHEPLQTGIKAIDSMIPIGRGQRELIIGDRQTGKTAIAIDTIINQKHSDVICIYVAIGQKKSTVSQIQDTLEKNGAMEYTIIVASTASELAPLQYIAPYAGCAMGEEFMENGKHVLIIYDDLSKHAVAYRAMSLLLRRPPGREAYPGDVFYLHSRLLERAAKLSDERGGGSLTALPLIETQAGDVSAYIPTNVISITDGQIFLESELFYSGVRPAVNPGISVSRVGGNAQIKAMKKVAGTLRLELAQYRELAAFAQFGSELDKETQARLAQGERIIEMLKQPQFKPMPVEEQVMMIYAITNKYLTDIEVVEIGPFESQFISYMVGHHAEVGQAIRDNGVLDQASETTLKEAIEAFKKQFKAERE.

Position 169 to 176 (169 to 176 (GDRQTGKT)) interacts with ATP.

The protein belongs to the ATPase alpha/beta chains family. In terms of assembly, F-type ATPases have 2 components, CF(1) - the catalytic core - and CF(0) - the membrane proton channel. CF(1) has five subunits: alpha(3), beta(3), gamma(1), delta(1), epsilon(1). CF(0) has three main subunits: a(1), b(2) and c(9-12). The alpha and beta chains form an alternating ring which encloses part of the gamma chain. CF(1) is attached to CF(0) by a central stalk formed by the gamma and epsilon chains, while a peripheral stalk is formed by the delta and b chains.

Its subcellular location is the cell membrane. The enzyme catalyses ATP + H2O + 4 H(+)(in) = ADP + phosphate + 5 H(+)(out). Functionally, produces ATP from ADP in the presence of a proton gradient across the membrane. The alpha chain is a regulatory subunit. The chain is ATP synthase subunit alpha from Alkaliphilus metalliredigens (strain QYMF).